A 439-amino-acid chain; its full sequence is Ribosomal protein uS12 methylthiotransferase RimO (439 aa).

An MTTase N-terminal domain is found at 5 to 117 (KKLHLISLGC…IDELIASKQS (113 aa)). Cys14, Cys48, Cys80, Cys149, Cys153, and Cys156 together coordinate [4Fe-4S] cluster. The region spanning 135–363 (TGSNYHAYIK…GEIAERSTLR (229 aa)) is the Radical SAM core domain. Positions 366–437 (EKMVGKTVEL…GMQLLATLIK (72 aa)) constitute a TRAM domain.

The protein belongs to the methylthiotransferase family. RimO subfamily. It depends on [4Fe-4S] cluster as a cofactor.

It is found in the cytoplasm. It carries out the reaction L-aspartate(89)-[ribosomal protein uS12]-hydrogen + (sulfur carrier)-SH + AH2 + 2 S-adenosyl-L-methionine = 3-methylsulfanyl-L-aspartate(89)-[ribosomal protein uS12]-hydrogen + (sulfur carrier)-H + 5'-deoxyadenosine + L-methionine + A + S-adenosyl-L-homocysteine + 2 H(+). Catalyzes the methylthiolation of an aspartic acid residue of ribosomal protein uS12. In Sulfurovum sp. (strain NBC37-1), this protein is Ribosomal protein uS12 methylthiotransferase RimO.